Reading from the N-terminus, the 473-residue chain is Mogroside IIIx synthase (473 aa).

The Proton acceptor role is filled by His21. Catalysis depends on Asp123, which acts as the Charge relay. UDP-alpha-D-glucose is bound by residues Thr274, Gln337, Trp355, Asn356, Ser357, Glu360, Asp376, and Gln377.

It belongs to the UDP-glycosyltransferase family. In terms of tissue distribution, highly expressed in mature fruits.

The catalysed reaction is mogroside IIE + UDP-alpha-D-glucose = mogroside IIIX + UDP + H(+). The enzyme catalyses mogroside III + UDP-alpha-D-glucose = siamenoside I + UDP + H(+). It functions in the pathway secondary metabolite biosynthesis; terpenoid biosynthesis. Its function is as follows. UDP-glycosyltransferase involved in the biosynthesis of cucurbitacin and mogroside tetracyclic triterpene natural products (e.g. siamenoside I and mogrosides IV, V and VI). Cucurbitacins have cytotoxic properties and exhibit deterrent taste as a defense barrier against herbivores. Mogrosides are nonsugar highly oxygenated compounds used as high-intensity zero-calorie sweeteners; they also possess pharmacological properties such as regulating immunity, lowering blood sugar and lipid levels, protecting the liver, and acting as antioxidants and antitumor agents. Catalyzes the branched glucosylations of mogroside II-E and mogroside III. The protein is Mogroside IIIx synthase of Siraitia grosvenorii (Monk's fruit).